We begin with the raw amino-acid sequence, 400 residues long: LIM homeobox transcription factor 1-beta.1 (400 aa).

2 consecutive LIM zinc-binding domains span residues A54–A113 and K114–L175. The tract at residues L175 to Q228 is disordered. The homeobox DNA-binding region spans P218–A277.

In terms of tissue distribution, shows a temporal expression pattern in three main areas: neural, kidney and limbs. From stage 13 onwards, expressed in regions of the nervous system including the placodes and otic vesicles, eye, specific sets of neurons, and in discreet regions of the neural tube. From stage 13, also expressed in the presumptive pronephros, and from stage 27 expression is predominant in the capsule of the pronephric glomus. Also expressed in the developing forelimbs and hindlimbs. In metamorphosing tadpoles, expressed in the eye, brain, muscle and mesonephric kidney.

It localises to the nucleus. In terms of biological role, required for early specification of the kidney glomus, lying upstream of wt1 in the pathway controlling glomus differentiation. The balance in levels and expression patterns of binding partners such as lhx1/lim-1 influences differentiation into glomus or tubule derivatives. Involved in specification of serotonergic neurons. This Xenopus laevis (African clawed frog) protein is LIM homeobox transcription factor 1-beta.1.